Here is a 1209-residue protein sequence, read N- to C-terminus: DNA-directed RNA polymerase subunit beta (1209 aa).

Basic and acidic residues predominate over residues 1173–1192 (QQEKKKLAEEAAKKDDKPDE). Residues 1173–1209 (QQEKKKLAEEAAKKDDKPDEPVDESDSSTSSDDKVSK) are disordered.

Belongs to the RNA polymerase beta chain family. As to quaternary structure, the RNAP catalytic core consists of 2 alpha, 1 beta, 1 beta' and 1 omega subunit. When a sigma factor is associated with the core the holoenzyme is formed, which can initiate transcription.

It carries out the reaction RNA(n) + a ribonucleoside 5'-triphosphate = RNA(n+1) + diphosphate. DNA-dependent RNA polymerase catalyzes the transcription of DNA into RNA using the four ribonucleoside triphosphates as substrates. This is DNA-directed RNA polymerase subunit beta from Lactobacillus johnsonii (strain CNCM I-12250 / La1 / NCC 533).